Consider the following 1391-residue polypeptide: DNA-directed RNA polymerase subunit beta' (1391 aa).

Zn(2+) contacts are provided by C72, C74, C87, and C90. Positions 462, 464, and 466 each coordinate Mg(2+). C816, C890, C897, and C900 together coordinate Zn(2+).

The protein belongs to the RNA polymerase beta' chain family. The RNAP catalytic core consists of 2 alpha, 1 beta, 1 beta' and 1 omega subunit. When a sigma factor is associated with the core the holoenzyme is formed, which can initiate transcription. Requires Mg(2+) as cofactor. It depends on Zn(2+) as a cofactor.

It carries out the reaction RNA(n) + a ribonucleoside 5'-triphosphate = RNA(n+1) + diphosphate. In terms of biological role, DNA-dependent RNA polymerase catalyzes the transcription of DNA into RNA using the four ribonucleoside triphosphates as substrates. This is DNA-directed RNA polymerase subunit beta' from Neisseria gonorrhoeae (strain ATCC 700825 / FA 1090).